A 145-amino-acid chain; its full sequence is D-aminoacyl-tRNA deacylase (145 aa).

The Gly-cisPro motif, important for rejection of L-amino acids signature appears at 137–138 (GP).

Belongs to the DTD family. In terms of assembly, homodimer.

It localises to the cytoplasm. It catalyses the reaction glycyl-tRNA(Ala) + H2O = tRNA(Ala) + glycine + H(+). The enzyme catalyses a D-aminoacyl-tRNA + H2O = a tRNA + a D-alpha-amino acid + H(+). Its function is as follows. An aminoacyl-tRNA editing enzyme that deacylates mischarged D-aminoacyl-tRNAs. Also deacylates mischarged glycyl-tRNA(Ala), protecting cells against glycine mischarging by AlaRS. Acts via tRNA-based rather than protein-based catalysis; rejects L-amino acids rather than detecting D-amino acids in the active site. By recycling D-aminoacyl-tRNA to D-amino acids and free tRNA molecules, this enzyme counteracts the toxicity associated with the formation of D-aminoacyl-tRNA entities in vivo and helps enforce protein L-homochirality. The sequence is that of D-aminoacyl-tRNA deacylase from Lactobacillus delbrueckii subsp. bulgaricus (strain ATCC BAA-365 / Lb-18).